The sequence spans 264 residues: Neurexophilin-2 (264 aa).

Residues 1-22 form the signal peptide; sequence MRLRPLPLVVVPGLLQLLFCDS. Residues 23 to 90 are II; it reads EKVVHATEGL…WDWLANITEV (68 aa). Residues Asn-86, Asn-139, Asn-149, and Asn-155 are each glycosylated (N-linked (GlcNAc...) asparagine). Residues 91-169 form an III region; the sequence is QEPLARTKRR…LVPPSKVVEF (79 aa). The interval 170-178 is IV (linker domain); it reads EVSPQSTLE. Residues 179 to 264 are v (Cys-rich); that stretch reads TKESKSFNCR…HSETPYLSSG (86 aa).

This sequence belongs to the neurexophilin family. In terms of processing, may be proteolytically processed at the boundary between the N-terminal non-conserved and the central conserved domain in neuron-like cells. Brain, only in a scattered subpopulation of neurons that probably represent inhibitory interneurons.

The protein localises to the secreted. May be signaling molecules that resemble neuropeptides and that act by binding to alpha-neurexins and possibly other receptors. This chain is Neurexophilin-2 (NXPH2), found in Bos taurus (Bovine).